Reading from the N-terminus, the 699-residue chain is TBC1 domain family member 23 (699 aa).

Positions 44-225 constitute a Rab-GAP TBC domain; the sequence is PLPADLRAKV…AIWDGYLQQA (182 aa). At S300 the chain carries Phosphoserine. The Rhodanese domain maps to 334 to 446; it reads EGVRFFVVDC…LQQHLADINV (113 aa). Residues 459 to 479 are compositionally biased toward polar residues; the sequence is STSGSRSSINSVDGESPNGSS. Residues 459–483 are disordered; sequence STSGSRSSINSVDGESPNGSSDRGM. Residues S469, S474, and S507 each carry the phosphoserine modification. T514 bears the Phosphothreonine mark. A may mediate the interaction with C17orf75, FAM91A1 and WDR11 region spans residues 514–573; that stretch reads TPVDRMSFNLPWPDRSCTERHVSSSDRVGKPYRGVKPVFSIGDEEEYDTDEIDSSSMSDD. The may mediate the interaction with WASHC1 stretch occupies residues 514–699; it reads TPVDRMSFNL…IMKVLDALES (186 aa). A phosphoserine mark is found at S520 and S571. The segment at 574 to 699 is may mediate the interaction with FKBP15 and WASHC2; required for endosome to Golgi trafficking; sequence DRKEVVNIQT…IMKVLDALES (126 aa).

In terms of assembly, directly interacts with GOLGA1 and GOLGA4. Interacts with FAM91A1, C17ORF75 and WDR11; the interaction recruits TBC1D23 to AP-1-derived vesicles. Directly interacts with WASHC1 and WASHC2A/FAM21A. Interacts with FKBP15. As to expression, isoform 1: Widely expressed, including in fetal adult brain (corpus callosum, pons, cerebellum), spinal cord, heart, skeletal muscle, thymus and bone marrow, and at lower levels in spleen. Hardly detected in liver, kidney, colon and testis. Isoform 2: Expressed at high levels in liver, kidney, colon and testis. Hardly detected in tissues expressing high levels of isoform 1. Expressed at low levels in spleen.

It is found in the golgi apparatus. The protein resides in the trans-Golgi network. The protein localises to the cytoplasmic vesicle. Functionally, putative Rab GTPase-activating protein which plays a role in vesicular trafficking. Involved in endosome-to-Golgi trafficking. Acts as a bridging protein by binding simultaneously to golgins, including GOLGA1 and GOLGA4, located at the trans-Golgi, and to the WASH complex, located on endosome-derived vesicles. Together with WDR11 complex facilitates the golgin-mediated capture of vesicles generated using AP-1. Plays a role in brain development, including in cortical neuron positioning. May also be important for neurite outgrowth, possibly through its involvement in membrane trafficking and cargo delivery, 2 processes that are essential for axonal and dendritic growth. May act as a general inhibitor of innate immunity signaling, strongly inhibiting multiple TLR and dectin/CLEC7A-signaling pathways. Does not alter initial activation events, but instead affects maintenance of inflammatory gene expression several hours after bacterial lipopolysaccharide (LPS) challenge. The protein is TBC1 domain family member 23 (TBC1D23) of Homo sapiens (Human).